A 387-amino-acid polypeptide reads, in one-letter code: GTPase Obg (387 aa).

The region spanning 1–159 is the Obg domain; that stretch reads MKFVDEAVIR…RSLRLELMLL (159 aa). The OBG-type G domain occupies 160–333; the sequence is ADVGLLGMPN…LALKLMDFID (174 aa). GTP is bound by residues 166–173, 191–195, 213–216, 283–286, and 314–316; these read GMPNAGKS, FTTLV, DIPG, NKTD, and SAY. The Mg(2+) site is built by S173 and T193.

This sequence belongs to the TRAFAC class OBG-HflX-like GTPase superfamily. OBG GTPase family. Monomer. Requires Mg(2+) as cofactor.

The protein resides in the cytoplasm. An essential GTPase which binds GTP, GDP and possibly (p)ppGpp with moderate affinity, with high nucleotide exchange rates and a fairly low GTP hydrolysis rate. Plays a role in control of the cell cycle, stress response, ribosome biogenesis and in those bacteria that undergo differentiation, in morphogenesis control. The protein is GTPase Obg of Shewanella loihica (strain ATCC BAA-1088 / PV-4).